The sequence spans 261 residues: Cytochrome c oxidase subunit 3 (261 aa).

Residues 1-15 lie on the Mitochondrial matrix side of the membrane; the sequence is MTHQTHAYHMVNPSP. Residues 16-34 traverse the membrane as a helical segment; the sequence is WPLTGALSALLMTSGLAMW. At 35-40 the chain is on the mitochondrial intermembrane side; it reads FHFNST. Residues 41–66 form a helical membrane-spanning segment; the sequence is LLLAMGLLTNILTMYQWWRDIIREST. The Mitochondrial matrix segment spans residues 67–72; the sequence is FQGHHT. Residues 73-105 form a helical membrane-spanning segment; the sequence is SIVQKGLRYGMILFIISEVFFFSGFFWAFYHSS. The Mitochondrial intermembrane segment spans residues 106–128; it reads LAPTPELGGCWPPTGIHPLNPLE. The chain crosses the membrane as a helical span at residues 129–152; that stretch reads VPLLNTSVLLASGVSITWAHHSLM. The Mitochondrial matrix portion of the chain corresponds to 153–155; it reads EGN. A helical membrane pass occupies residues 156–183; that stretch reads RKNMLQGLFITISLGVYFTLLQASEYYE. Residues 184 to 190 lie on the Mitochondrial intermembrane side of the membrane; the sequence is ASFTISD. Residues 191–223 traverse the membrane as a helical segment; the sequence is GVYGSTFFVATGFHGLHVIIGSTFLIVCFLRQL. The Mitochondrial matrix portion of the chain corresponds to 224 to 232; the sequence is KFHFTSSHH. The helical transmembrane segment at 233 to 256 threads the bilayer; it reads FGFEAAAWYWHFVDVVWLFLYVSI. Topologically, residues 257–261 are mitochondrial intermembrane; the sequence is YWWGS.

It belongs to the cytochrome c oxidase subunit 3 family. In terms of assembly, component of the cytochrome c oxidase (complex IV, CIV), a multisubunit enzyme composed of 14 subunits. The complex is composed of a catalytic core of 3 subunits MT-CO1, MT-CO2 and MT-CO3, encoded in the mitochondrial DNA, and 11 supernumerary subunits COX4I, COX5A, COX5B, COX6A, COX6B, COX6C, COX7A, COX7B, COX7C, COX8 and NDUFA4, which are encoded in the nuclear genome. The complex exists as a monomer or a dimer and forms supercomplexes (SCs) in the inner mitochondrial membrane with NADH-ubiquinone oxidoreductase (complex I, CI) and ubiquinol-cytochrome c oxidoreductase (cytochrome b-c1 complex, complex III, CIII), resulting in different assemblies (supercomplex SCI(1)III(2)IV(1) and megacomplex MCI(2)III(2)IV(2)).

It localises to the mitochondrion inner membrane. It carries out the reaction 4 Fe(II)-[cytochrome c] + O2 + 8 H(+)(in) = 4 Fe(III)-[cytochrome c] + 2 H2O + 4 H(+)(out). Its function is as follows. Component of the cytochrome c oxidase, the last enzyme in the mitochondrial electron transport chain which drives oxidative phosphorylation. The respiratory chain contains 3 multisubunit complexes succinate dehydrogenase (complex II, CII), ubiquinol-cytochrome c oxidoreductase (cytochrome b-c1 complex, complex III, CIII) and cytochrome c oxidase (complex IV, CIV), that cooperate to transfer electrons derived from NADH and succinate to molecular oxygen, creating an electrochemical gradient over the inner membrane that drives transmembrane transport and the ATP synthase. Cytochrome c oxidase is the component of the respiratory chain that catalyzes the reduction of oxygen to water. Electrons originating from reduced cytochrome c in the intermembrane space (IMS) are transferred via the dinuclear copper A center (CU(A)) of subunit 2 and heme A of subunit 1 to the active site in subunit 1, a binuclear center (BNC) formed by heme A3 and copper B (CU(B)). The BNC reduces molecular oxygen to 2 water molecules using 4 electrons from cytochrome c in the IMS and 4 protons from the mitochondrial matrix. This is Cytochrome c oxidase subunit 3 (MT-CO3) from Equus caballus (Horse).